The sequence spans 236 residues: 4-aminobenzoate synthase (236 aa).

6 residues coordinate Fe(2+): Glu-87, His-94, Glu-148, His-180, Asp-184, and His-187.

The protein belongs to the CADD family. Homodimer. Requires Fe(2+) as cofactor. The cofactor is Mn(2+).

Functionally, involved in de novo para-aminobenzoate (PABA) biosynthesis. Acts as a self-sacrificing or 'suicide' enzyme that utilizes its own active site tyrosine residue(s) as the substrate for PABA synthesis. The side chain of the tyrosine residue is released from the protein backbone via cleavage of the C(alpha)-C(beta) bond, leaving a glycine in place of the original tyrosine residue. Reaction requires O(2) and a reduced dimetal cofactor. In Chlamydia muridarum (strain MoPn / Nigg), this protein is 4-aminobenzoate synthase.